Consider the following 141-residue polypeptide: Probable mobile endonuclease E (141 aa).

Residues 115–141 form a disordered region; the sequence is KMSKSENRSAFNRRNQTQNIGGNQRKG. The segment covering 122 to 141 has biased composition (polar residues); sequence RSAFNRRNQTQNIGGNQRKG.

This chain is Probable mobile endonuclease E (mobE), found in Escherichia coli (Bacteriophage T4).